A 631-amino-acid polypeptide reads, in one-letter code: MSLIHKGATLALFLALTMVVNGVFGRFIVEKSSVTILNPLAMRSKHDAAIANFGVPNYGGYMIGSVVYAGQGAYGCDSFDKTFKPKFPRPTILIIDRGECYFALKVWNGQQSGVAAVLVADNVDEPLITMDSPEESKEADDFIEKLNIPSALIDFSFANTLKQALKKGEEVVLKIDWSESLPHPDERVEYELWTNTNDECGARCDEQMNFVKNFKGHAQILEKGGYSLFTPHYITWFCPKDYVSSNQCKSQCINQGRYCAPDPEQDFGDGYDGKDIVFENLRQLCVHKVAKENNRSWVWWDYVTDFHIRCSMKEKKYSKECAERVVESLGLPLDKIKKCIGDPDANVENEVLKAEQALQVGQGDRGDVTILPTLIVNNAQYRGKLERNAVLKAICSGFKERTEPGICLSGDIETNECLEANGGCWEDKKSNVTACKDTFRGRVCECPVVNGVQYKGDGYTSCEPYGPARCSINQGGCWSETKKGLTFSACSNLETSGCRCPPGFKGDGLKCEDIDECKEQSACQCDGCNCKNKWGGFECKCSGNRLYMKEQDTCIERSGSRIGWFPTFVILAAVASICVGGYVFYKYRLRSYMDSEIMAIMSQYMPLESQNTTDPMTGESQHQQLRLTSAA.

Residues 1-25 form the signal peptide; the sequence is MSLIHKGATLALFLALTMVVNGVFG. The Lumenal portion of the chain corresponds to 26–563; the sequence is RFIVEKSSVT…CIERSGSRIG (538 aa). Residues 57 to 165 form the PA domain; the sequence is NYGGYMIGSV…SFANTLKQAL (109 aa). 2 N-linked (GlcNAc...) asparagine glycosylation sites follow: Asn-294 and Asn-431. EGF-like domains lie at 413-463 and 494-540; these read ETNE…TSCE and ETSG…FECK. 5 cysteine pairs are disulfide-bonded: Cys-417–Cys-435, Cys-424–Cys-444, Cys-446–Cys-462, Cys-498–Cys-511, and Cys-530–Cys-539. A helical membrane pass occupies residues 564-584; that stretch reads WFPTFVILAAVASICVGGYVF. The Cytoplasmic portion of the chain corresponds to 585-631; the sequence is YKYRLRSYMDSEIMAIMSQYMPLESQNTTDPMTGESQHQQLRLTSAA. The short motif at 604-607 is the Tyrosine-based internalization motif element; the sequence is YMPL. The tract at residues 610-631 is disordered; sequence QNTTDPMTGESQHQQLRLTSAA.

Belongs to the VSR (BP-80) family. As to expression, expressed in seedlings, roots, leaves, flowers and siliques.

It localises to the membrane. It is found in the golgi apparatus membrane. Its subcellular location is the cytoplasmic vesicle. The protein resides in the clathrin-coated vesicle membrane. The protein localises to the prevacuolar compartment membrane. Vacuolar-sorting receptor (VSR) involved in clathrin-coated vesicles sorting from Golgi apparatus to vacuoles. This Arabidopsis thaliana (Mouse-ear cress) protein is Vacuolar-sorting receptor 6 (VSR6).